A 138-amino-acid chain; its full sequence is Ribulose bisphosphate carboxylase small subunit (138 aa).

This sequence belongs to the RuBisCO small chain family. In terms of assembly, heterohexadecamer of 8 large and 8 small subunits.

The protein localises to the plastid. The protein resides in the chloroplast. Its function is as follows. RuBisCO catalyzes two reactions: the carboxylation of D-ribulose 1,5-bisphosphate, the primary event in carbon dioxide fixation, as well as the oxidative fragmentation of the pentose substrate in the photorespiration process. Both reactions occur simultaneously and in competition at the same active site. Although the small subunit is not catalytic it is essential for maximal activity. The chain is Ribulose bisphosphate carboxylase small subunit from Cyanidium caldarium (Red alga).